The following is a 308-amino-acid chain: Putative transcription elongation factor S-II (308 aa).

The TFIIS N-terminal domain maps to 5–84 (EETQSLCKQV…KDWKNVVDGK (80 aa)). A disordered region spans residues 82–126 (DGKSKSQDDGGAPPAKKHRKESVEEAKPEKKKIEAPYKRPEPSSR). The span at 102–125 (ESVEEAKPEKKKIEAPYKRPEPSS) shows a compositional bias: basic and acidic residues. In terms of domain architecture, TFIIS central spans 148-263 (TRLKSAQLLL…EHQMSVQQGT (116 aa)). A TFIIS-type zinc finger spans residues 266–306 (DMFKCGKCGKKNCTYTQLQTRSSDEPMTTFVFCLECGNRWK). Residues Cys-270, Cys-273, Cys-298, and Cys-301 each contribute to the Zn(2+) site.

The protein belongs to the TFS-II family.

The protein localises to the nucleus. Its function is as follows. Necessary for efficient RNA polymerase II transcription elongation past template-encoded arresting sites. The arresting sites in DNA have the property of trapping a certain fraction of elongating RNA polymerases that pass through, resulting in locked ternary complexes. Cleavage of the nascent transcript by S-II allows the resumption of elongation from the new 3'-terminus. In Caenorhabditis elegans, this protein is Putative transcription elongation factor S-II.